A 522-amino-acid polypeptide reads, in one-letter code: ATP synthase subunit alpha (522 aa).

176–183 (GDRQTGKT) contributes to the ATP binding site.

It belongs to the ATPase alpha/beta chains family. As to quaternary structure, F-type ATPases have 2 components, CF(1) - the catalytic core - and CF(0) - the membrane proton channel. CF(1) has five subunits: alpha(3), beta(3), gamma(1), delta(1), epsilon(1). CF(0) has four main subunits: a, b, b' and c.

It localises to the cell membrane. The enzyme catalyses ATP + H2O + 4 H(+)(in) = ADP + phosphate + 5 H(+)(out). Produces ATP from ADP in the presence of a proton gradient across the membrane. The alpha chain is a regulatory subunit. This Chloroflexus aggregans (strain MD-66 / DSM 9485) protein is ATP synthase subunit alpha.